Here is a 119-residue protein sequence, read N- to C-terminus: C-C motif chemokine 24 (119 aa).

The N-terminal stretch at 1–26 (MAGLATFVVSLLLVTLCAHCIDPAGS) is a signal peptide. 2 disulfide bridges follow: cysteine 33-cysteine 58 and cysteine 34-cysteine 74. N-linked (GlcNAc...) asparagine glycans are attached at residues asparagine 54 and asparagine 115.

It belongs to the intercrine beta (chemokine CC) family.

Its subcellular location is the secreted. Chemotactic for resting T-lymphocytes, and eosinophils. Has lower chemotactic activity for neutrophils but none for monocytes and activated lymphocytes. Is a strong suppressor of colony formation by a multipotential hematopoietic progenitor cell line. Binds to CCR3. The protein is C-C motif chemokine 24 of Canis lupus familiaris (Dog).